Here is a 340-residue protein sequence, read N- to C-terminus: uncharacterized protein (340 aa).

This is an uncharacterized protein from Acanthamoeba polyphaga mimivirus (APMV).